The sequence spans 245 residues: OVARIAN TUMOR DOMAIN-containing deubiquitinating enzyme 11 (245 aa).

The disordered stretch occupies residues 1–37; the sequence is MDENHRNPFANASTSARASGSTSASSNSSFSSSVADT. The span at 10 to 35 shows a compositional bias: low complexity; that stretch reads ANASTSARASGSTSASSNSSFSSSVA. In terms of domain architecture, OTU spans 101–225; it reads LAELQMEGDG…EVHYNSLYAN (125 aa). Residue Asp109 is part of the active site. The active-site Nucleophile is the Cys112. Residue His218 is part of the active site.

It belongs to the peptidase C85 family.

The catalysed reaction is Thiol-dependent hydrolysis of ester, thioester, amide, peptide and isopeptide bonds formed by the C-terminal Gly of ubiquitin (a 76-residue protein attached to proteins as an intracellular targeting signal).. Functionally, hydrolase that can remove conjugated ubiquitin from proteins in vitro and may therefore play an important regulatory role at the level of protein turnover by preventing degradation. Inactive cysteine protease. The chain is OVARIAN TUMOR DOMAIN-containing deubiquitinating enzyme 11 from Arabidopsis thaliana (Mouse-ear cress).